A 318-amino-acid chain; its full sequence is NAC domain-containing protein 59 (318 aa).

The 151-residue stretch at 24–174 (LPPGFRFHPT…ECVISRVFHT (151 aa)) folds into the NAC domain. The DNA-binding element occupies 121–180 (VGMKKTLVFYKGRAPKGVKTNWVMHEYRLEGKFAIDNLSKTAKNECVISRVFHTRTDGTK).

In terms of tissue distribution, mostly expressed in root cortex, phloem, atrichoblast and quiescent center (QC), and, to a lower extent, in root endodermis, xylem, pericycle, columella and lateral root cap (LRC). Expressed in roots, cotyledons, very young leaves, senescing leaves, mature flowers and pollen.

The protein localises to the nucleus. Transcription activator that binds to DNA in promoters of target genes on a specific bipartite motif 5'-[AG]CGT[AG](4-5n)[AG][CT]ACGCAA-3'. Triggers the expression of senescence-associated genes during age-, salt- and dark-induced senescence through a regulatory network that may involve cross-talk with salt- and H(2)O(2)-dependent signaling pathways. The sequence is that of NAC domain-containing protein 59 from Arabidopsis thaliana (Mouse-ear cress).